Reading from the N-terminus, the 419-residue chain is Oxamate carbamoyltransferase subunit AllG (419 aa).

This sequence belongs to the AllG family. As to quaternary structure, the OXTCase is composed of 3 subunits, AllF, AllG and AllH. Mg(2+) is required as a cofactor.

It catalyses the reaction oxamate + carbamoyl phosphate = N-carbamoyl-2-oxoglycine + phosphate. Its pathway is nitrogen metabolism; (S)-allantoin degradation. In terms of biological role, component of a carbamoyltransferase involved in the anaerobic nitrogen utilization via the assimilation of allantoin. Catalyzes the conversion of oxalurate (N-carbamoyl-2-oxoglycine) to oxamate and carbamoyl phosphate. The protein is Oxamate carbamoyltransferase subunit AllG of Escherichia coli (strain K12).